The following is a 176-amino-acid chain: MTVDALSNADNQDLRDNFIANRFLSHEAKLLDQRRFTEWLDLLDDEIRYIVPLRLMALDFDREVRADSFHINDGKVNLKVRAKRSSVSSGWGETPPSRTLRLVGSVMTDRIDQEGVLEVESAVIIYRQRAAIGQGDVLAFRRTDWLRIDGGTVKLLKRVALLTDASLATPNLAIFL.

This sequence belongs to the bacterial ring-hydroxylating dioxygenase beta subunit family. PdmA (subunit alpha) and PdmB (subunit beta) form the oxygenase component of a bacterial Rieske non-heme iron oxygenase (RO) system.

It carries out the reaction a 1,1-dimethyl-3-phenylurea + 2 reduced [2Fe-2S]-[ferredoxin] + O2 + 2 H(+) = a 1-methyl-3-phenylurea + formaldehyde + 2 oxidized [2Fe-2S]-[ferredoxin] + H2O. The enzyme catalyses isoproturon + 2 reduced [2Fe-2S]-[ferredoxin] + O2 + 2 H(+) = 1-methyl-3-[4-(propan-2-yl)phenyl]urea + formaldehyde + 2 oxidized [2Fe-2S]-[ferredoxin] + H2O. It catalyses the reaction chlorotoluron + 2 reduced [2Fe-2S]-[ferredoxin] + O2 + 2 H(+) = 3-(3-chloro-4-methylphenyl)-1-methylurea + formaldehyde + 2 oxidized [2Fe-2S]-[ferredoxin] + H2O. The catalysed reaction is metoxuron + 2 reduced [2Fe-2S]-[ferredoxin] + O2 + 2 H(+) = 3-(3-chloro-4-methoxylphenyl)-1-methylurea + formaldehyde + 2 oxidized [2Fe-2S]-[ferredoxin] + H2O. It carries out the reaction monuron + 2 reduced [2Fe-2S]-[ferredoxin] + O2 + 2 H(+) = 3-(4-chlorophenyl)-1-methylurea + formaldehyde + 2 oxidized [2Fe-2S]-[ferredoxin] + H2O. The enzyme catalyses diuron + 2 reduced [2Fe-2S]-[ferredoxin] + O2 + 2 H(+) = 3-(3,4-dichlorophenyl)-1-methylurea + formaldehyde + 2 oxidized [2Fe-2S]-[ferredoxin] + H2O. It catalyses the reaction fluometuron + 2 reduced [2Fe-2S]-[ferredoxin] + O2 + 2 H(+) = 3-[3-(trifluoromethyl)phenyl]-1-methylurea + formaldehyde + 2 oxidized [2Fe-2S]-[ferredoxin] + H2O. The catalysed reaction is fenuron + 2 reduced [2Fe-2S]-[ferredoxin] + O2 + 2 H(+) = 1-methyl-3-phenylurea + formaldehyde + 2 oxidized [2Fe-2S]-[ferredoxin] + H2O. It functions in the pathway xenobiotic degradation. Its activity is regulated as follows. Activity is stimulated in vitro by coexpression of a [3Fe-4S]-type ferredoxin. Functionally, part of the multicomponent N,N-dimethyl phenylurea N-demethylase responsible for the initial N-demethylation step during the bacterial metabolism of N,N-dimethyl-substituted phenylurea herbicides. Catalyzes the mono-N-demethylation of N,N-dimethyl-substituted phenylurea herbicides to their mono-N-demethylated derivatives. Is active on isoproturon (IPU), chlorotoluron, metoxuron, monoron, diuron, fluometuron and fenuron, but cannot transform the N-methoxy-N-methyl-substituted herbicides. This is N,N-dimethyl phenylurea N-demethylase subunit beta from Sphingobium sp. (strain YBL2).